The sequence spans 238 residues: ATP-dependent Clp protease ATP-binding subunit CLPT1, chloroplastic (238 aa).

Residues 1-64 (MASYTVSFIP…VPKLRCLTSA (64 aa)) constitute a chloroplast transit peptide. The 146-residue stretch at 83 to 228 (IPKWSARAIK…KEVEKSMNED (146 aa)) folds into the Clp R domain. 2 repeat regions span residues 86-151 (WSAR…LGKS) and 163-228 (LTEP…MNED).

The protein belongs to the ClpA/ClpB family. Monomer and homodimer. Binds to the CLP3-6 ring (P-ring). The dimers monomerize before association to the P-ring. Component of the chloroplastic Clp protease core complex which consist of at least 16 proteins: CLPP4 (3 copies), CLPP5 (3 copies), CLPR4 (2 copies), ClpP1 (1 copy), CLPP6 (1 copy), CLPR2 (1 copy), CLPT1 (1 copy), CLPT2 (1 copy) and 3 copies of CLPP3 and/or CLPR1 and/or CLPR3. Interacts with CLPC2 and CLPD. Interacts with CPN21. No interactions with CLPS1.

It localises to the plastid. The protein localises to the chloroplast. Its function is as follows. Accessory protein regulating the assembly of the plastidial Clp protease system. CLPT1 first binds to the heptameric P-ring containing the CLP3-6 subunits followed by CLPT2, and only then does the P-ring combine with the R-ring composed of the clpP1 and CLPR1-4 subunits. Once the core complex is fully assembled, it then associates to the CLPC chaperone partner to form the functional protease. CLPT1 and CLPT2 are partially redundant. The polypeptide is ATP-dependent Clp protease ATP-binding subunit CLPT1, chloroplastic (Arabidopsis thaliana (Mouse-ear cress)).